Reading from the N-terminus, the 21-residue chain is Hydroxypicolinic acid-activating enzyme (21 aa).

In terms of biological role, involved in etamycin biosynthesis. The polypeptide is Hydroxypicolinic acid-activating enzyme (Streptomyces griseoviridis).